A 249-amino-acid polypeptide reads, in one-letter code: Phosphate import ATP-binding protein PstB 2 (249 aa).

The ABC transporter domain maps to 4 to 244 (FDIENLDLYY…PSDDRTRGYV (241 aa)). 36 to 43 (GPSGCGKS) lines the ATP pocket.

The protein belongs to the ABC transporter superfamily. Phosphate importer (TC 3.A.1.7) family. In terms of assembly, the complex is composed of two ATP-binding proteins (PstB), two transmembrane proteins (PstC and PstA) and a solute-binding protein (PstS).

It is found in the cell inner membrane. It carries out the reaction phosphate(out) + ATP + H2O = ADP + 2 phosphate(in) + H(+). Part of the ABC transporter complex PstSACB involved in phosphate import. Responsible for energy coupling to the transport system. The chain is Phosphate import ATP-binding protein PstB 2 from Vibrio vulnificus (strain CMCP6).